The primary structure comprises 386 residues: Protein phosphatase methylesterase 1 (386 aa).

The tract at residues M1–K38 is disordered. A Phosphoserine modification is found at S15. Asymmetric dimethylarginine; alternate is present on R16. R16 is subject to Omega-N-methylarginine; alternate. The residue at position 42 (S42) is a Phosphoserine. Residues S156 and D181 contribute to the active site. The segment covering I254 to S265 has biased composition (acidic residues). The disordered stretch occupies residues I254 to K280. Residues I268–K280 show a composition bias toward basic and acidic residues. The active site involves H349.

It belongs to the AB hydrolase superfamily. In terms of assembly, binds PPP2CA and PPP2CB. In terms of processing, phosphorylated by SIK1 following increases in intracellular sodium, leading to dissociation from the protein phosphatase 2A (PP2A) complex and subsequent dephosphorylation of sodium/potassium-transporting ATPase ATP1A1.

The enzyme catalyses [phosphatase 2A protein]-C-terminal L-leucine methyl ester + H2O = [phosphatase 2A protein]-C-terminal L-leucine + methanol + H(+). Demethylates proteins that have been reversibly carboxymethylated. Demethylates PPP2CB (in vitro) and PPP2CA. Binding to PPP2CA displaces the manganese ion and inactivates the enzyme. The polypeptide is Protein phosphatase methylesterase 1 (PPME1) (Homo sapiens (Human)).